The primary structure comprises 541 residues: Phenazine N-monooxygenase PhzNO1 (541 aa).

Residues Asp39, 47 to 50 (TWYW), 59 to 60 (DT), Tyr65, and Ile112 contribute to the FAD site. 57–59 (RAD) serves as a coordination point for NADP(+). NADP(+) is bound by residues 186 to 192 (TGSTGVQ), 209 to 210 (RS), and Trp492.

It belongs to the FAD-binding monooxygenase family. FAD serves as cofactor.

It carries out the reaction 1,6-dihydroxyphenazine + NADPH + O2 = 1,6-dihydroxyphenazine N(5)-oxide + NADP(+) + H2O. The enzyme catalyses 1,6-dihydroxyphenazine N(5)-oxide + NADPH + O2 = 1,6-dihydroxyphenazine N(5),N(10)-dioxide + NADP(+) + H2O. The catalysed reaction is 1-hydroxy-6-methoxyphenazine + NADPH + O2 = 1-hydroxy-6-methoxyphenazine N(10)-oxide + NADP(+) + H2O. It catalyses the reaction quinolin-8-ol + NADPH + O2 = 8-hydroxyquinoline N-oxide + NADP(+) + H2O. In terms of biological role, involved in the biosynthesis of phenazine natural products including myxin, an N(5),N(10)-dioxide phenazine antiobiotic, which has antimicrobial activity. Catalyzes the aromatic N-oxidations of phenazines, such as 1,6-dihydroxyphenazine (DHP), 1,6-dihydroxyphenazine N(5)-oxide (DHPO) and 1-hydroxy-6-methoxyphenazine to produce DHPO, iodinin (1,6-dihydroxyphenazine N(5),N(10)-dioxide) and 1-hydroxy-6-methoxyphenazine N(10)-oxide, respectively. Also catalyzes the N-oxidation of 8-hydroxyquinoline, but not 6-hydroxyquinoline (6-HQ), quinoline, quinoxaline, quinine and 2-phenylpyridine. This is Phenazine N-monooxygenase PhzNO1 from Lysobacter antibioticus.